Reading from the N-terminus, the 352-residue chain is Cyclin-O (352 aa).

The disordered stretch occupies residues M1–K40. Positions P28–K40 are enriched in basic residues. S83 bears the Phosphoserine mark.

This sequence belongs to the cyclin family. Present in respiratory cells (at protein level). Expressed in multiciliated tissue in brain and fallopian tube (at protein level). Highly expressed in oocytes.

The protein localises to the cytoplasm. It is found in the nucleus. Its subcellular location is the nucleolus. In terms of biological role, specifically required for generation of multiciliated cells, possibly by promoting a cell cycle state compatible with centriole amplification and maturation. Acts downstream of MCIDAS to promote mother centriole amplification and maturation in preparation for apical docking. May be involved in apoptosis in lymphoid cells; however, this result requires additional evidences in vivo. May be involved in oocyte meiotic resumption in oocytes. The protein is Cyclin-O of Mus musculus (Mouse).